A 425-amino-acid chain; its full sequence is SRRM2 protein homolog rsr-2 (425 aa).

Positions 57-100 (MDHNRKRQIEVKCTEFEMLLEDKGLDDEDIERKVGEYRKNLLKQ) constitute a CWF21 domain. Disordered stretches follow at residues 109–131 (DEEL…RDKM) and 161–425 (ESEL…SDSE). Positions 164-178 (LPQKDDKEKLLETLR) are enriched in basic and acidic residues. A compositionally biased stretch (low complexity) spans 189–202 (SSSSSSSSSSSSES). Basic residues predominate over residues 210 to 221 (RKDRKKKEKKQK). Composition is skewed to basic and acidic residues over residues 222 to 251 (LKEM…KEEP) and 259 to 305 (DSRK…EDRT). Residues 306 to 317 (VRRRSPERRRQQ) show a composition bias toward basic residues. 3 stretches are compositionally biased toward basic and acidic residues: residues 321 to 332 (SVERRKSPQRRD), 355 to 366 (SRMDELEVKQEP), and 383 to 398 (RVEK…RKSS). Residues 399-425 (SESSSGSSDSDSSSDSSSSSDSSSDSE) are compositionally biased toward low complexity.

This sequence belongs to the CWC21 family. As to quaternary structure, interacts with RNA polymerase II subunit ama-1, binding to both hyperphosphorylated and hypophosphorylated forms, but more strongly when ama-1 is phosphorylated at 'Ser-5' of the C-terminal heptapeptide repeat. Interacts with pre-mRNA-processing factor prp-19. May also interact with pre-mRNA-splicing factor 8 homolog prp-8. As to expression, expressed in the proximal germline, but not in the most distal part where mitosis takes place. May be expressed ubiquitously in somatic cells.

It is found in the nucleus. It localises to the chromosome. The protein resides in the nuclear body. Its function is as follows. Plays a role in pre-mRNA splicing as component of the spliceosome. Involved in modulating global transcription, probably acting via interaction with RNA polymerase II. Influences the chromatin distribution and phosphorylation state of RNA polymerase II subunit ama-1. Involved in regulating the germline sex determination pathway. The protein is SRRM2 protein homolog rsr-2 of Caenorhabditis elegans.